The following is a 192-amino-acid chain: UPF0149 protein KPK_0755 (192 aa).

This sequence belongs to the UPF0149 family.

The polypeptide is UPF0149 protein KPK_0755 (Klebsiella pneumoniae (strain 342)).